We begin with the raw amino-acid sequence, 333 residues long: 4-hydroxyproline epimerase (333 aa).

The active-site Proton acceptor is the Cys-90. Residues 91–92 (GH) and Asp-249 each bind substrate. Cys-253 serves as the catalytic Proton donor. 254–255 (GT) serves as a coordination point for substrate.

The protein belongs to the proline racemase family. Homodimer.

The enzyme catalyses trans-4-hydroxy-L-proline = cis-4-hydroxy-D-proline. With respect to regulation, inhibited by iodoacetate, iodoacetamide and by high amounts (10 mM) of pyrrole-2-carboxylic acid (PYC). Not inhibited by PYC at 1 mM. In terms of biological role, allows intracellular utilization of 4-hydroxyproline, one of the major constituents of host collagen, by converting 4-hydroxy-L-proline to 4-hydroxy-D-proline, which can be further metabolized by intracellular 4-hydroxy-D-proline oxidases. Strong B-cell mitogen. Plays an important role in the regulation of intra- and extracellular amino acid pools, allowing the bacterium to profit from host precursors and enzymatic pathways. The sequence is that of 4-hydroxyproline epimerase from Brucella melitensis biotype 1 (strain ATCC 23456 / CCUG 17765 / NCTC 10094 / 16M).